The following is a 30-amino-acid chain: Kappa-sparatoxin-Hv1d (30 aa).

3 cysteine pairs are disulfide-bonded: cysteine 3/cysteine 17, cysteine 10/cysteine 22, and cysteine 16/cysteine 26.

In terms of tissue distribution, expressed by the venom gland.

The protein localises to the secreted. Its function is as follows. Inhibitor of voltage-gated potassium channels of the Kv4/KCND family. Blocks calcium channels (Cav). The chain is Kappa-sparatoxin-Hv1d from Heteropoda venatoria (Brown huntsman spider).